The primary structure comprises 510 residues: Dolichyl-P-Man:Man5GlcNAc2-PP-dolichol alpha-1,3-mannosyltransferase Alg3 (510 aa).

Over 1–43 (MAPPKAASHRPAVRRKKSGTLVDSILDKYLNVRFFKYLLLEPA) the chain is Cytoplasmic. The chain crosses the membrane as a helical span at residues 44-64 (ALPIVGLFVLLAELVINVVVI). Residues 65 to 97 (QRVPYTEIDWVAYMQECEGFLNGTTNYSLLRGD) lie on the Lumenal side of the membrane. Residues 98–118 (TGPLVYPAAFVYIYSALYYVT) traverse the membrane as a helical segment. At 119-125 (SHGTNVR) the chain is on the cytoplasmic side. Residues 126–146 (LAQYIFAGIYLLQLALVLRLY) traverse the membrane as a helical segment. At 147–171 (SKSRKVPPYVLVLSAFTSYRIHSIY) the chain is on the lumenal side. Residues 172 to 192 (VLRLFNDPVAVLLLYAALNLF) form a helical membrane-spanning segment. Over 193-211 (LDRRWTLGSTFFSLAVGVK) the chain is Cytoplasmic. A helical membrane pass occupies residues 212–232 (MNILLFAPALLLFYLANLGLL). Residue arginine 233 is a topological domain, lumenal. The helical transmembrane segment at 234-254 (TILQLAVCGVIQLLLGAPFLL) threads the bilayer. Topologically, residues 255–294 (THPVEYLRGSFDLGRIFEHKWTVNYRFLSRDVFENRTFHV) are cytoplasmic. A helical transmembrane segment spans residues 295–315 (SLLGLHLLLLLAFAKPIWTFF). Residues 316-403 (QSYVRLRRIE…YGIHFDRCTQ (88 aa)) are Lumenal-facing. Positions 337 to 358 (LQLKAQKRPKKVEKDKDKDQKK) are disordered. Over residues 348-358 (VEKDKDKDQKK) the composition is skewed to basic and acidic residues. The helical transmembrane segment at 404–424 (LALLPFFLCNLVGVACSRSLH) threads the bilayer. Residues 425–426 (YQ) lie on the Cytoplasmic side of the membrane. A helical transmembrane segment spans residues 427–447 (FYVWYFHSLPYLAWSTPYSLG). Residues 448-464 (VRCLILGLIEYCWNTYP) lie on the Lumenal side of the membrane. The helical transmembrane segment at 465-485 (STNFSSAALHFTHIILLAGVA) threads the bilayer. The Cytoplasmic portion of the chain corresponds to 486–510 (KQLIQTMRINNAAKREQQEQQKKLQ).

The protein belongs to the glycosyltransferase ALG3 family.

It localises to the endoplasmic reticulum membrane. The catalysed reaction is an alpha-D-Man-(1-&gt;2)-alpha-D-Man-(1-&gt;2)-alpha-D-Man-(1-&gt;3)-[alpha-D-Man-(1-&gt;6)]-beta-D-Man-(1-&gt;4)-beta-D-GlcNAc-(1-&gt;4)-alpha-D-GlcNAc-diphospho-di-trans,poly-cis-dolichol + a di-trans,poly-cis-dolichyl beta-D-mannosyl phosphate = an alpha-D-Man-(1-&gt;2)-alpha-D-Man-(1-&gt;2)-alpha-D-Man-(1-&gt;3)-[alpha-D-Man-(1-&gt;3)-alpha-D-Man-(1-&gt;6)]-beta-D-Man-(1-&gt;4)-beta-D-GlcNAc-(1-&gt;4)-alpha-D-GlcNAc-diphospho-di-trans,poly-cis-dolichol + a di-trans,poly-cis-dolichyl phosphate + H(+). Its pathway is protein modification; protein glycosylation. In terms of biological role, probable alpha-1,3-mannosyltransferase involved in the N-glycosylation pathway. Involved in glycosylation of the TNF receptor grnd, regulating its ligand affinity. Required for normal epithelial growth and architecture. Suppressor of JNK-dependent intestinal stem cell proliferation. This chain is Dolichyl-P-Man:Man5GlcNAc2-PP-dolichol alpha-1,3-mannosyltransferase Alg3, found in Drosophila melanogaster (Fruit fly).